A 499-amino-acid chain; its full sequence is Probable mitochondrial-processing peptidase subunit alpha-2, chloroplastic/mitochondrial (499 aa).

This sequence belongs to the peptidase M16 family. In terms of assembly, heterodimer of alpha and beta subunits, forming the mitochondrial processing protease (MPP) in which subunit alpha is involved in substrate recognition and binding and subunit beta is the catalytic subunit. Component of the ubiquinol-cytochrome c oxidoreductase (cytochrome b-c1 complex, complex III, CIII), a multisubunit enzyme composed of 10 subunits. The complex is composed of 3 respiratory subunits cytochrome b (MT-CYB), cytochrome c1 (CYC1-1 or CYC1-2) and Rieske protein (UCR1-1 or UCR1-2), 2 core protein subunits MPPalpha1 (or MPPalpha2) and MPPB, and 5 low-molecular weight protein subunits QCR7-1 (or QCR7-2), UCRQ-1 (or UCRQ-2), QCR9, UCRY and probably QCR6-1 (or QCR6-2). The complex exists as an obligatory dimer and forms supercomplexes (SCs) in the inner mitochondrial membrane with NADH-ubiquinone oxidoreductase (complex I, CI), resulting in different assemblies (supercomplexes SCI(1)III(2) and SCI(2)III(4)). Interacts with TIM23-2.

It localises to the plastid. The protein resides in the chloroplast stroma. It is found in the mitochondrion matrix. The protein localises to the mitochondrion inner membrane. Its function is as follows. Substrate recognition and binding subunit of the essential mitochondrial processing protease (MPP), which cleaves the mitochondrial sequence off newly imported precursors proteins. Functionally, component of the ubiquinol-cytochrome c oxidoreductase, a multisubunit transmembrane complex that is part of the mitochondrial electron transport chain which drives oxidative phosphorylation. The respiratory chain contains 3 multisubunit complexes succinate dehydrogenase (complex II, CII), ubiquinol-cytochrome c oxidoreductase (cytochrome b-c1 complex, complex III, CIII) and cytochrome c oxidase (complex IV, CIV), that cooperate to transfer electrons derived from NADH and succinate to molecular oxygen, creating an electrochemical gradient over the inner membrane that drives transmembrane transport and the ATP synthase. The cytochrome b-c1 complex catalyzes electron transfer from ubiquinol to cytochrome c, linking this redox reaction to translocation of protons across the mitochondrial inner membrane, with protons being carried across the membrane as hydrogens on the quinol. In the process called Q cycle, 2 protons are consumed from the matrix, 4 protons are released into the intermembrane space and 2 electrons are passed to cytochrome c. The polypeptide is Probable mitochondrial-processing peptidase subunit alpha-2, chloroplastic/mitochondrial (MPPalpha2) (Arabidopsis thaliana (Mouse-ear cress)).